A 232-amino-acid chain; its full sequence is Phosphatidylserine decarboxylase proenzyme (232 aa).

The active-site Schiff-base intermediate with substrate; via pyruvic acid is the Ser-190. A Pyruvic acid (Ser); by autocatalysis modification is found at Ser-190.

The protein belongs to the phosphatidylserine decarboxylase family. PSD-A subfamily. Heterodimer of a large membrane-associated beta subunit and a small pyruvoyl-containing alpha subunit. Pyruvate is required as a cofactor. Post-translationally, is synthesized initially as an inactive proenzyme. Formation of the active enzyme involves a self-maturation process in which the active site pyruvoyl group is generated from an internal serine residue via an autocatalytic post-translational modification. Two non-identical subunits are generated from the proenzyme in this reaction, and the pyruvate is formed at the N-terminus of the alpha chain, which is derived from the carboxyl end of the proenzyme. The post-translation cleavage follows an unusual pathway, termed non-hydrolytic serinolysis, in which the side chain hydroxyl group of the serine supplies its oxygen atom to form the C-terminus of the beta chain, while the remainder of the serine residue undergoes an oxidative deamination to produce ammonia and the pyruvoyl prosthetic group on the alpha chain.

It is found in the cell membrane. The catalysed reaction is a 1,2-diacyl-sn-glycero-3-phospho-L-serine + H(+) = a 1,2-diacyl-sn-glycero-3-phosphoethanolamine + CO2. It functions in the pathway phospholipid metabolism; phosphatidylethanolamine biosynthesis; phosphatidylethanolamine from CDP-diacylglycerol: step 2/2. Functionally, catalyzes the formation of phosphatidylethanolamine (PtdEtn) from phosphatidylserine (PtdSer). The protein is Phosphatidylserine decarboxylase proenzyme of Sinorhizobium medicae (strain WSM419) (Ensifer medicae).